Consider the following 442-residue polypeptide: Histidinol dehydrogenase (442 aa).

The NAD(+) site is built by Tyr142, Gln204, and Asn227. Ser250, Gln272, and His275 together coordinate substrate. Zn(2+)-binding residues include Gln272 and His275. Catalysis depends on proton acceptor residues Glu340 and His341. Substrate contacts are provided by His341, Asp374, Glu428, and His433. Asp374 serves as a coordination point for Zn(2+). His433 provides a ligand contact to Zn(2+).

The protein belongs to the histidinol dehydrogenase family. It depends on Zn(2+) as a cofactor.

The enzyme catalyses L-histidinol + 2 NAD(+) + H2O = L-histidine + 2 NADH + 3 H(+). The protein operates within amino-acid biosynthesis; L-histidine biosynthesis; L-histidine from 5-phospho-alpha-D-ribose 1-diphosphate: step 9/9. Catalyzes the sequential NAD-dependent oxidations of L-histidinol to L-histidinaldehyde and then to L-histidine. This chain is Histidinol dehydrogenase, found in Prochlorococcus marinus (strain MIT 9313).